Reading from the N-terminus, the 226-residue chain is MSTLGLLLILLGIIITCTFVILRSVNPIYSILNLIVIYGCYASILLTVEMEFLACIYILVNVGAIAVLFLFIVMMININIVEIQETMKKYNIYMFVGFIGLIGIMGILITNYQIRIKEEVIADFSMFLLNTEITTLQATPSYLDFYELFVETTDLRAMGSNVIYGSQSIWFIMACIILLIGMVGVIYITEDLIIEKRKLNARRRQDINSQVLREYKITIKNYREIK.

5 helical membrane-spanning segments follow: residues 2–22, 28–48, 56–76, 90–110, and 169–189; these read STLGLLLILLGIIITCTFVIL, IYSILNLIVIYGCYASILLTV, IYILVNVGAIAVLFLFIVMMI, YNIYMFVGFIGLIGIMGILIT, and IWFIMACIILLIGMVGVIYIT.

This sequence belongs to the complex I subunit 6 family.

It localises to the mitochondrion membrane. The catalysed reaction is a ubiquinone + NADH + 5 H(+)(in) = a ubiquinol + NAD(+) + 4 H(+)(out). In terms of biological role, core subunit of the mitochondrial membrane respiratory chain NADH dehydrogenase (Complex I) that is believed to belong to the minimal assembly required for catalysis. Complex I functions in the transfer of electrons from NADH to the respiratory chain. The immediate electron acceptor for the enzyme is believed to be ubiquinone. This Dictyostelium citrinum (Slime mold) protein is NADH-ubiquinone oxidoreductase chain 6 (nad6).